A 227-amino-acid chain; its full sequence is Esterase OVCA2 (227 aa).

The segment at 44-68 is disordered; that stretch reads GPHPVPDPPGPEGARSDFGSCPPEE. Active-site charge relay system residues include Ser119, Asp179, and His206.

This sequence belongs to the LovG family. Proteolytically degraded in response to RA and 4HPR treatment in a time- and dose-dependent manner in the promyelocytic leukemia cell line HL-60. In terms of tissue distribution, ubiquitously expressed.

The enzyme catalyses a carboxylic ester + H2O = an alcohol + a carboxylate + H(+). Exhibits ester hydrolase activity with a strong preference for long-chain alkyl ester substrates and high selectivity against a variety of short, branched, and substituted esters. Is able to hydrolyze ester bonds within a wide range of p-nitrophenyl derivatives (C2-C14) in vitro, with a strong preference toward substrates of &gt;8 carbons. In Homo sapiens (Human), this protein is Esterase OVCA2.